A 1286-amino-acid chain; its full sequence is CLIP-associating protein 2 (1286 aa).

The interval 1-40 (MRRLICKRICDYKSFDDEESVDGNRPSSAASAFKVPAPKT) is golgi localization. Ser-14 and Ser-20 each carry phosphoserine. The disordered stretch occupies residues 17–70 (DEESVDGNRPSSAASAFKVPAPKTPGNPVNSARKPGSAGGPKAGGTSKEGGAGA). A compositionally biased stretch (gly residues) spans 53-69 (SAGGPKAGGTSKEGGAG). Positions 66 to 317 (GGAGAVDEDD…KSLQTYLKSS (252 aa)) are TOG 1. HEAT repeat units lie at residues 179–214 (HGAE…IRHT), 215–251 (HVPR…EWQT), and 256–293 (RHAA…HFPG). Disordered regions lie at residues 320 to 350 (VASL…TANP) and 355 to 374 (GRVS…LQRS). 3 positions are modified to phosphoserine: Ser-322, Ser-333, and Ser-336. Residues 322 to 340 (SLPQSDRSSSSSQESLNRP) show a composition bias toward low complexity. Positions 341–350 (FSSKWSTANP) are enriched in polar residues. Phosphoserine is present on residues Ser-374, Ser-376, and Ser-413. Residues 410-473 (SYASLEDTSD…GSRSGSPGRV (64 aa)) are disordered. The segment covering 417–431 (TSDKMDGTASEDGRV) has biased composition (basic and acidic residues). The interval 450 to 565 (RGRSRTKMVS…GPGYGMSQSS (116 aa)) is interaction with microtubules, MAPRE1 and MAPRE3. Residues 459–473 (SQSQPGSRSGSPGRV) are compositionally biased toward low complexity. Ser-461, Ser-465, Ser-469, Ser-484, and Ser-495 each carry phosphoserine. Residues 492-566 (NSASAQKRSK…PGYGMSQSSR (75 aa)) are disordered. An SXIP motif 1; mediates interaction with MAPRE1 and targeting to microtubule plus ends motif is present at residues 500-503 (SKIP). Position 513 is a phosphoserine (Ser-513). The short motif at 523-526 (SRIP) is the SXIP motif 2; mediates interaction with MAPRE1 and targeting to microtubule plus ends element. 7 positions are modified to phosphoserine: Ser-531, Ser-535, Ser-570, Ser-572, Ser-581, Ser-614, and Ser-620. Residues 606 to 616 (RYESYGMHSDD) show a composition bias toward basic and acidic residues. Residues 606 to 638 (RYESYGMHSDDDANSDASSACSERSYSSRNGSI) are disordered. Positions 620–634 (SDASSACSERSYSSR) are enriched in low complexity. The interval 642 to 873 (MRQTEDVAEV…TKLLHNHLRN (232 aa)) is TOG 2. 2 HEAT repeats span residues 702–739 (KVFS…KMGA) and 764–801 (LQFN…QMDP). Thr-779 carries the post-translational modification Phosphothreonine. The segment at 864-1286 (TKLLHNHLRN…DPTTDVSGQS (423 aa)) is interaction with RSN and localization to the Golgi and kinetochores. Disordered regions lie at residues 870–920 (HLRN…FDYD) and 944–990 (SFRS…QPAL). 2 stretches are compositionally biased toward polar residues: residues 872 to 884 (RNTG…SMGS) and 893 to 914 (SPAN…TLSP). At Ser-884 the chain carries Phosphoserine. Phosphoserine occurs at positions 944, 947, 1005, and 1021. Residues 947–964 (SQEDMSEPLKRDPKKEDG) are compositionally biased toward basic and acidic residues. A required for cortical localization region spans residues 1009–1286 (RDYNPYNYSD…DPTTDVSGQS (278 aa)). 3 HEAT repeats span residues 1046 to 1083 (LDHS…TQEE), 1090 to 1127 (EHFK…HQPA), and 1208 to 1245 (LLLP…VIGD).

Belongs to the CLASP family. In terms of assembly, interacts with microtubules. Interacts with MAPRE1; probably required for targeting to the growing microtubule plus ends. Interacts with CLIP2, ERC1, MAPRE3, PHLDB2 and RSN. The interaction with ERC1 may be mediated by PHLDB2. Interacts with GCC2; recruits CLASP2 to Golgi membranes. Interacts with MACF1. Interacts with SOGA1 and MTCL1. Phosphorylated by GSK3B. Phosphorylation by GSK3B may negatively regulate binding to microtubule lattices in lamella.

It localises to the cytoplasm. It is found in the cytoskeleton. The protein localises to the microtubule organizing center. Its subcellular location is the centrosome. The protein resides in the chromosome. It localises to the centromere. It is found in the kinetochore. The protein localises to the spindle. Its subcellular location is the golgi apparatus. The protein resides in the trans-Golgi network. It localises to the cell membrane. It is found in the cell projection. The protein localises to the ruffle membrane. Its subcellular location is the cell cortex. Its function is as follows. Microtubule plus-end tracking protein that promotes the stabilization of dynamic microtubules. Involved in the nucleation of noncentrosomal microtubules originating from the trans-Golgi network (TGN). Required for the polarization of the cytoplasmic microtubule arrays in migrating cells towards the leading edge of the cell. May act at the cell cortex to enhance the frequency of rescue of depolymerizing microtubules by attaching their plus-ends to cortical platforms composed of ERC1 and PHLDB2. This cortical microtubule stabilizing activity is regulated at least in part by phosphatidylinositol 3-kinase signaling. Also performs a similar stabilizing function at the kinetochore which is essential for the bipolar alignment of chromosomes on the mitotic spindle. Acts as a mediator of ERBB2-dependent stabilization of microtubules at the cell cortex. The chain is CLIP-associating protein 2 (Clasp2) from Rattus norvegicus (Rat).